We begin with the raw amino-acid sequence, 76 residues long: MASKGLQDLKQQVEGTAQEAVSAAGAAAQQVVDQATEAGQKAMDQLAKTTQETIDKTANQASDTFSGIGKKFGLLK.

In terms of tissue distribution, expressed in adipose tissue (at protein level). Highly expressed in omental and subcutaneous adipose tissues. Expressed in heart, cornea, liver, kidney and spleen.

It is found in the nucleus. Functionally, plays a role in fat cell development; promotes adipogenic differentiation and stimulates transcription initiation of master adipogenesis factors like PPARG and CEBPA at early stages of preadipocyte differentiation. Its overexpression confers resistance to the anticancer chemotherapeutic drug cisplatin. The chain is Adipogenesis regulatory factor (ADIRF) from Homo sapiens (Human).